We begin with the raw amino-acid sequence, 221 residues long: Ribosomal RNA small subunit methyltransferase G (221 aa).

S-adenosyl-L-methionine is bound by residues Gly89, Leu94, 140 to 141 (VE), and Arg154.

It belongs to the methyltransferase superfamily. RNA methyltransferase RsmG family.

It is found in the cytoplasm. It carries out the reaction guanosine(527) in 16S rRNA + S-adenosyl-L-methionine = N(7)-methylguanosine(527) in 16S rRNA + S-adenosyl-L-homocysteine. In terms of biological role, specifically methylates the N7 position of guanine in position 527 of 16S rRNA. The sequence is that of Ribosomal RNA small subunit methyltransferase G from Methylibium petroleiphilum (strain ATCC BAA-1232 / LMG 22953 / PM1).